We begin with the raw amino-acid sequence, 921 residues long: Isoleucine--tRNA ligase (921 aa).

The short motif at 57-67 (PYANGDIHMGH) is the 'HIGH' region element. Residue glutamate 552 participates in L-isoleucyl-5'-AMP binding. The 'KMSKS' region signature appears at 593–597 (KMSKS). Lysine 596 serves as a coordination point for ATP. Residues cysteine 887, cysteine 890, cysteine 907, and cysteine 910 each contribute to the Zn(2+) site.

This sequence belongs to the class-I aminoacyl-tRNA synthetase family. IleS type 1 subfamily. As to quaternary structure, monomer. It depends on Zn(2+) as a cofactor.

Its subcellular location is the cytoplasm. The enzyme catalyses tRNA(Ile) + L-isoleucine + ATP = L-isoleucyl-tRNA(Ile) + AMP + diphosphate. Functionally, catalyzes the attachment of isoleucine to tRNA(Ile). As IleRS can inadvertently accommodate and process structurally similar amino acids such as valine, to avoid such errors it has two additional distinct tRNA(Ile)-dependent editing activities. One activity is designated as 'pretransfer' editing and involves the hydrolysis of activated Val-AMP. The other activity is designated 'posttransfer' editing and involves deacylation of mischarged Val-tRNA(Ile). This is Isoleucine--tRNA ligase from Halalkalibacterium halodurans (strain ATCC BAA-125 / DSM 18197 / FERM 7344 / JCM 9153 / C-125) (Bacillus halodurans).